Consider the following 73-residue polypeptide: Large ribosomal subunit protein bL31 (73 aa).

It belongs to the bacterial ribosomal protein bL31 family. Type A subfamily. In terms of assembly, part of the 50S ribosomal subunit.

Functionally, binds the 23S rRNA. This is Large ribosomal subunit protein bL31 from Rhizobium etli (strain CIAT 652).